A 573-amino-acid chain; its full sequence is Protein DSE1 (573 aa).

WD repeat units lie at residues 144–185, 315–351, 356–395, and 397–448; these read DFPP…GCAK, RKNT…GKPV, AKKG…NMKY, and ELVH…NGKG. Residues 500–509 show a composition bias toward low complexity; that stretch reads SDSSMLSLSN. Residues 500 to 519 form a disordered region; sequence SDSSMLSLSNESDHSMTETS. A Glycyl lysine isopeptide (Lys-Gly) (interchain with G-Cter in ubiquitin) cross-link involves residue K553.

The protein belongs to the WD repeat DSE1 family.

Its subcellular location is the bud neck. Involved in cell wall metabolism and required for the separation of the mother and daughter cells. The sequence is that of Protein DSE1 (DSE1) from Saccharomyces cerevisiae (strain ATCC 204508 / S288c) (Baker's yeast).